Consider the following 369-residue polypeptide: Phospho-N-acetylmuramoyl-pentapeptide-transferase (369 aa).

10 helical membrane-spanning segments follow: residues 3–23 (ALLF…PLFI), 53–73 (GGIV…LLTW), 81–101 (VTPS…VGFL), 118–138 (WQKI…AITL), 162–182 (FMAL…CLIV), 198–218 (LAAG…FWQF), 240–260 (PLDL…FLWW), 267–287 (IFMG…LAIL), 290–310 (TELL…SVVL), and 347–367 (FWII…LEWI).

It belongs to the glycosyltransferase 4 family. MraY subfamily. The cofactor is Mg(2+).

The protein localises to the cell membrane. The catalysed reaction is UDP-N-acetyl-alpha-D-muramoyl-L-alanyl-gamma-D-glutamyl-meso-2,6-diaminopimeloyl-D-alanyl-D-alanine + di-trans,octa-cis-undecaprenyl phosphate = di-trans,octa-cis-undecaprenyl diphospho-N-acetyl-alpha-D-muramoyl-L-alanyl-D-glutamyl-meso-2,6-diaminopimeloyl-D-alanyl-D-alanine + UMP. Its pathway is cell wall biogenesis; peptidoglycan biosynthesis. Catalyzes the initial step of the lipid cycle reactions in the biosynthesis of the cell wall peptidoglycan: transfers peptidoglycan precursor phospho-MurNAc-pentapeptide from UDP-MurNAc-pentapeptide onto the lipid carrier undecaprenyl phosphate, yielding undecaprenyl-pyrophosphoryl-MurNAc-pentapeptide, known as lipid I. The polypeptide is Phospho-N-acetylmuramoyl-pentapeptide-transferase (Clavibacter michiganensis subsp. michiganensis (strain NCPPB 382)).